Reading from the N-terminus, the 363-residue chain is Oxygen-dependent coproporphyrinogen-III oxidase (363 aa).

Ser119 provides a ligand contact to substrate. A divalent metal cation contacts are provided by His123 and His133. His133 (proton donor) is an active-site residue. 135–137 (NYR) is a substrate binding site. A divalent metal cation is bound by residues His167 and His197. An important for dimerization region spans residues 287-322 (YVEFNLVWDRGTIFGLQTNGRTESILMSLPPLVRWE).

The protein belongs to the aerobic coproporphyrinogen-III oxidase family. In terms of assembly, homodimer. The cofactor is a divalent metal cation.

It localises to the cytoplasm. The enzyme catalyses coproporphyrinogen III + O2 + 2 H(+) = protoporphyrinogen IX + 2 CO2 + 2 H2O. The protein operates within porphyrin-containing compound metabolism; protoporphyrin-IX biosynthesis; protoporphyrinogen-IX from coproporphyrinogen-III (O2 route): step 1/1. Its function is as follows. Involved in the heme and chlorophyll biosynthesis. Catalyzes the aerobic oxidative decarboxylation of propionate groups of rings A and B of coproporphyrinogen-III to yield the vinyl groups in protoporphyrinogen-IX. This chain is Oxygen-dependent coproporphyrinogen-III oxidase, found in Parasynechococcus marenigrum (strain WH8102).